Consider the following 172-residue polypeptide: RNA silencing suppressor p19 (172 aa).

The span at 1–20 (MERAIQGNDAREQANSERWD) shows a compositional bias: basic and acidic residues. Residues 1–38 (MERAIQGNDAREQANSERWDGGSGGTTSPFKLPDESPS) are disordered.

It belongs to the tombusviruses protein p19 family. Homodimer.

Functionally, acts as a suppressor of RNA-mediated gene silencing, also known as post-transcriptional gene silencing (PTGS), a mechanism of plant viral defense that limits the accumulation of viral RNAs. Binds to short interfering RNAs (siRNAs) with high affinity. Acts as a molecular caliper to specifically select siRNAs based on the length of the duplex region of the RNA. The protein is RNA silencing suppressor p19 of Capsicum annuum (Capsicum pepper).